Reading from the N-terminus, the 173-residue chain is Endoribonuclease YbeY (173 aa).

3 residues coordinate Zn(2+): H120, H124, and H130.

The protein belongs to the endoribonuclease YbeY family. Zn(2+) is required as a cofactor.

It localises to the cytoplasm. Functionally, single strand-specific metallo-endoribonuclease involved in late-stage 70S ribosome quality control and in maturation of the 3' terminus of the 16S rRNA. This Kineococcus radiotolerans (strain ATCC BAA-149 / DSM 14245 / SRS30216) protein is Endoribonuclease YbeY.